A 351-amino-acid chain; its full sequence is Protein-glutamate methylesterase/protein-glutamine glutaminase 2 (351 aa).

The 118-residue stretch at 4–121 (KVLVVDDSTL…PQGFNEYQDL (118 aa)) folds into the Response regulatory domain. Asp-55 carries the 4-aspartylphosphate modification. The CheB-type methylesterase domain maps to 156-348 (RTVNTQLVAI…DKLLQYLASV (193 aa)). Active-site residues include Ser-168, His-194, and Asp-290.

The protein belongs to the CheB family. In terms of processing, phosphorylated by CheA. Phosphorylation of the N-terminal regulatory domain activates the methylesterase activity.

The protein localises to the cytoplasm. It carries out the reaction [protein]-L-glutamate 5-O-methyl ester + H2O = L-glutamyl-[protein] + methanol + H(+). It catalyses the reaction L-glutaminyl-[protein] + H2O = L-glutamyl-[protein] + NH4(+). Involved in chemotaxis. Part of a chemotaxis signal transduction system that modulates chemotaxis in response to various stimuli. Catalyzes the demethylation of specific methylglutamate residues introduced into the chemoreceptors (methyl-accepting chemotaxis proteins or MCP) by CheR. Also mediates the irreversible deamidation of specific glutamine residues to glutamic acid. This Shewanella oneidensis (strain ATCC 700550 / JCM 31522 / CIP 106686 / LMG 19005 / NCIMB 14063 / MR-1) protein is Protein-glutamate methylesterase/protein-glutamine glutaminase 2.